The chain runs to 129 residues: MARDKTRMKRKERKNIAAGVAHVNSSFNNTKILISDVQGNAISWSSAGTMGFKGSRKSTPYAAQMAAEDAAKKAQDHGMKTIEVEVQGPGSGRESALRALAAAGLNITSIRDVTPMAHNGCRPPKRRRV.

It belongs to the universal ribosomal protein uS11 family. Part of the 30S ribosomal subunit. Interacts with proteins S7 and S18. Binds to IF-3.

In terms of biological role, located on the platform of the 30S subunit, it bridges several disparate RNA helices of the 16S rRNA. Forms part of the Shine-Dalgarno cleft in the 70S ribosome. The sequence is that of Small ribosomal subunit protein uS11 from Cereibacter sphaeroides (strain ATCC 17029 / ATH 2.4.9) (Rhodobacter sphaeroides).